The chain runs to 258 residues: MVLIRVLANLLILQLSYAQRSSELVIGGDECNINEHRFLVALYKSGRFRCGGTLINQEWVLTAAHCDRRNMEIKLGMHSKNVPNEDEQRRVPKEKFFCDSNKNHTQWNKDIMLIRLNSPVNNSTHIAPLSLPSNPPIVGSVCRIMGWGTITSPNETYPDVPHCANINLFNYTVCHGAHAGLPATSRTLCAGVLEEGKDTCKGDSGGPLICNGQFQGIVSWGGDPCAQPREPGVYTKVFDHLDWIQNIIAGNTTATCPL.

A signal peptide spans 1–18; sequence MVLIRVLANLLILQLSYA. The propeptide occupies 19–24; that stretch reads QRSSEL. Residues 25-249 enclose the Peptidase S1 domain; that stretch reads VIGGDECNIN…HLDWIQNIIA (225 aa). 6 disulfides stabilise this stretch: Cys-31-Cys-163, Cys-50-Cys-66, Cys-98-Cys-256, Cys-142-Cys-210, Cys-174-Cys-189, and Cys-200-Cys-225. The Charge relay system role is filled by His-65. A glycan (N-linked (GlcNAc...) asparagine) is linked at Asn-103. Catalysis depends on Asp-110, which acts as the Charge relay system. N-linked (GlcNAc...) asparagine glycans are attached at residues Asn-121, Asn-122, Asn-154, and Asn-170. Residue Ser-204 is the Charge relay system of the active site. A glycan (N-linked (GlcNAc...) asparagine) is linked at Asn-251.

It belongs to the peptidase S1 family. Snake venom subfamily. In terms of assembly, monomer. As to expression, expressed by the venom gland.

The protein localises to the secreted. In terms of biological role, snake venom serine protease that may act in the hemostasis system of the prey. This is Snake venom serine protease KN13 from Trimeresurus stejnegeri (Chinese green tree viper).